Here is a 308-residue protein sequence, read N- to C-terminus: Pantothenate synthetase (308 aa).

39 to 46 (MGALHDGH) serves as a coordination point for ATP. Catalysis depends on His-46, which acts as the Proton donor. Gln-71 contacts (R)-pantoate. Residue Gln-71 participates in beta-alanine binding. 157–160 (GEKD) contributes to the ATP binding site. Gln-163 is a binding site for (R)-pantoate. ATP contacts are provided by residues Val-186 and 194 to 197 (MSSR). The interval 286-308 (IETPAGTAGPDGDRQYAQSPWRN) is disordered.

The protein belongs to the pantothenate synthetase family. Homodimer.

It localises to the cytoplasm. It carries out the reaction (R)-pantoate + beta-alanine + ATP = (R)-pantothenate + AMP + diphosphate + H(+). It participates in cofactor biosynthesis; (R)-pantothenate biosynthesis; (R)-pantothenate from (R)-pantoate and beta-alanine: step 1/1. In terms of biological role, catalyzes the condensation of pantoate with beta-alanine in an ATP-dependent reaction via a pantoyl-adenylate intermediate. This Mycolicibacterium paratuberculosis (strain ATCC BAA-968 / K-10) (Mycobacterium paratuberculosis) protein is Pantothenate synthetase.